Consider the following 365-residue polypeptide: Putative nudix hydrolase 1 (365 aa).

The region spanning 72 to 201 (VNYVAAAIIL…DFIRLVDEAV (130 aa)) is the Nudix hydrolase domain. The Nudix box signature appears at 109–130 (GRVEAGETIEEAVVREVKEETG). Mg(2+)-binding residues include E124 and E128.

This sequence belongs to the Nudix hydrolase family. The cofactor is Mg(2+). Requires Mn(2+) as cofactor.

Functionally, probably mediates the hydrolysis of some nucleoside diphosphate derivatives. In Caenorhabditis elegans, this protein is Putative nudix hydrolase 1 (ndx-1).